A 669-amino-acid chain; its full sequence is DNA ligase (669 aa).

Position 35-39 (aspartate 35–aspartate 39) interacts with NAD(+). The segment at tyrosine 52 to glutamate 71 is disordered. Positions proline 61–glutamate 71 are enriched in basic and acidic residues. Residues serine 84 to leucine 85 and glutamate 115 contribute to the NAD(+) site. Lysine 117 (N6-AMP-lysine intermediate) is an active-site residue. NAD(+)-binding residues include arginine 138, glutamate 175, lysine 290, and lysine 314. 4 residues coordinate Zn(2+): cysteine 408, cysteine 411, cysteine 426, and cysteine 432. The region spanning alanine 590–glutamate 669 is the BRCT domain.

It belongs to the NAD-dependent DNA ligase family. LigA subfamily. The cofactor is Mg(2+). It depends on Mn(2+) as a cofactor.

The enzyme catalyses NAD(+) + (deoxyribonucleotide)n-3'-hydroxyl + 5'-phospho-(deoxyribonucleotide)m = (deoxyribonucleotide)n+m + AMP + beta-nicotinamide D-nucleotide.. Functionally, DNA ligase that catalyzes the formation of phosphodiester linkages between 5'-phosphoryl and 3'-hydroxyl groups in double-stranded DNA using NAD as a coenzyme and as the energy source for the reaction. It is essential for DNA replication and repair of damaged DNA. The chain is DNA ligase from Porphyromonas gingivalis (strain ATCC BAA-308 / W83).